The following is an 877-amino-acid chain: Alanine--tRNA ligase (877 aa).

Residues His556, His560, Cys657, and His661 each contribute to the Zn(2+) site.

It belongs to the class-II aminoacyl-tRNA synthetase family. Zn(2+) is required as a cofactor.

The protein localises to the cytoplasm. The enzyme catalyses tRNA(Ala) + L-alanine + ATP = L-alanyl-tRNA(Ala) + AMP + diphosphate. Functionally, catalyzes the attachment of alanine to tRNA(Ala) in a two-step reaction: alanine is first activated by ATP to form Ala-AMP and then transferred to the acceptor end of tRNA(Ala). Also edits incorrectly charged Ser-tRNA(Ala) and Gly-tRNA(Ala) via its editing domain. In Wolbachia pipientis wMel, this protein is Alanine--tRNA ligase.